Consider the following 487-residue polypeptide: Serine/threonine-protein kinase 4 (487 aa).

Residue Met1 is modified to N-acetylmethionine. Residue Thr3 is modified to Phosphothreonine. The 252-residue stretch at 30–281 folds into the Protein kinase domain; that stretch reads FDVLEKLGEG…ATQLLQHPFV (252 aa). Residues 36 to 44 and Lys59 contribute to the ATP site; that span reads LGEGSYGSV. The Proton acceptor role is filled by Asp149. Thr183 is modified (phosphothreonine; by autocatalysis). The residue at position 265 (Ser265) is a Phosphoserine. A coiled-coil region spans residues 290–310; the sequence is LRDLINEAMDVKLKRQESQQR. Positions 303 to 312 are enriched in basic and acidic residues; sequence KRQESQQREV. Positions 303 to 332 are disordered; that stretch reads KRQESQQREVDQDDEENSEEDEMDSGTMVR. Acidic residues predominate over residues 313–326; the sequence is DQDDEENSEEDEMD. Ser320 is subject to Phosphoserine. Phosphothreonine is present on residues Thr340 and Thr367. Thr387 is subject to Phosphothreonine; by PKB/AKT1. Phosphoserine occurs at positions 410 and 414. A Phosphotyrosine modification is found at Tyr433. Positions 433–480 constitute an SARAH domain; the sequence is YEFLKSWTVEDLQKRLLALDPMMEQEIEEIRQKYQSKRQPILDAIEAK.

It belongs to the protein kinase superfamily. STE Ser/Thr protein kinase family. STE20 subfamily. In terms of assembly, homodimer; mediated via the coiled-coil region. Interacts with NORE1, which inhibits autoactivation. Interacts with and stabilizes SAV1. Interacts with RASSF1. Interacts with FOXO3. Interacts with RASSF2 (via SARAH domain). Interacts with AR, PKB/AKT1, TNNI3 and SIRT1. Interacts with DLG5 (via PDZ domain 3). Interacts with MARK3 and SCRIB in the presence of DLG5. Mg(2+) serves as cofactor. In terms of processing, autophosphorylated on serine and threonine residues. Phosphorylation at Thr-387 by PKB/AKT1, leads to inhibition of its: kinase activity, nuclear translocation and autophosphorylation at Thr-183. It also diminishes its cleavage by caspases and its ability to phosphorylate FOXO3. Proteolytically cleaved by caspase-3 during apoptosis at Asp-326 and Asp-349 resulting in a 37 kDa or a 39 kDa subunit respectively. The 39 kDa subunit is further cleaved into the 37 kDa form. Proteolytic cleavage results in kinase activation and nuclear translocation of the truncated form (MST1/N). It is less likely that cleavage at Asp-349 is a prerequisite for activation as this site is not conserved in the murine ortholog.

The protein localises to the cytoplasm. It is found in the nucleus. It carries out the reaction L-seryl-[protein] + ATP = O-phospho-L-seryl-[protein] + ADP + H(+). The enzyme catalyses L-threonyl-[protein] + ATP = O-phospho-L-threonyl-[protein] + ADP + H(+). With respect to regulation, inhibited by the C-terminal non-catalytic region. Activated by caspase-cleavage. Full activation also requires homodimerization and autophosphorylation of Thr-183. Activated by RASSF1 which acts by preventing its dephosphorylation. Functionally, stress-activated, pro-apoptotic kinase which, following caspase-cleavage, enters the nucleus and induces chromatin condensation followed by internucleosomal DNA fragmentation. Key component of the Hippo signaling pathway which plays a pivotal role in organ size control and tumor suppression by restricting proliferation and promoting apoptosis. The core of this pathway is composed of a kinase cascade wherein STK3/MST2 and STK4/MST1, in complex with its regulatory protein SAV1, phosphorylates and activates LATS1/2 in complex with its regulatory protein MOB1, which in turn phosphorylates and inactivates YAP1 oncoprotein and WWTR1/TAZ. Phosphorylation of YAP1 by LATS2 inhibits its translocation into the nucleus to regulate cellular genes important for cell proliferation, cell death, and cell migration. STK3/MST2 and STK4/MST1 are required to repress proliferation of mature hepatocytes, to prevent activation of facultative adult liver stem cells (oval cells), and to inhibit tumor formation. Phosphorylates 'Ser-14' of histone H2B (H2BS14ph) during apoptosis. Phosphorylates FOXO3 upon oxidative stress, which results in its nuclear translocation and cell death initiation. Phosphorylates MOBKL1A, MOBKL1B and RASSF2. Phosphorylates TNNI3 (cardiac Tn-I) and alters its binding affinity to TNNC1 (cardiac Tn-C) and TNNT2 (cardiac Tn-T). Phosphorylates FOXO1 on 'Ser-212' and regulates its activation and stimulates transcription of PMAIP1 in a FOXO1-dependent manner. Phosphorylates SIRT1 and inhibits SIRT1-mediated p53/TP53 deacetylation, thereby promoting p53/TP53 dependent transcription and apoptosis upon DNA damage. Acts as an inhibitor of PKB/AKT1. Phosphorylates AR on 'Ser-650' and suppresses its activity by intersecting with PKB/AKT1 signaling and antagonizing formation of AR-chromatin complexes. The sequence is that of Serine/threonine-protein kinase 4 (STK4) from Papio anubis (Olive baboon).